Consider the following 258-residue polypeptide: Proteasome subunit alpha (258 aa).

This sequence belongs to the peptidase T1A family. As to quaternary structure, the 20S proteasome core is composed of 14 alpha and 14 beta subunits that assemble into four stacked heptameric rings, resulting in a barrel-shaped structure. The two inner rings, each composed of seven catalytic beta subunits, are sandwiched by two outer rings, each composed of seven alpha subunits. The catalytic chamber with the active sites is on the inside of the barrel. Has a gated structure, the ends of the cylinder being occluded by the N-termini of the alpha-subunits. Is capped at one or both ends by the proteasome regulatory ATPase, PAN.

Its subcellular location is the cytoplasm. The formation of the proteasomal ATPase PAN-20S proteasome complex, via the docking of the C-termini of PAN into the intersubunit pockets in the alpha-rings, triggers opening of the gate for substrate entry. Interconversion between the open-gate and close-gate conformations leads to a dynamic regulation of the 20S proteasome proteolysis activity. Its function is as follows. Component of the proteasome core, a large protease complex with broad specificity involved in protein degradation. This Aeropyrum pernix (strain ATCC 700893 / DSM 11879 / JCM 9820 / NBRC 100138 / K1) protein is Proteasome subunit alpha.